A 94-amino-acid chain; its full sequence is Large ribosomal subunit protein bL27 (94 aa).

The propeptide occupies 1-9 (MLKLNLQFF). The tract at residues 13 to 32 (KGLGSTKNGRDSESKRLGAK) is disordered. The span at 20-32 (NGRDSESKRLGAK) shows a compositional bias: basic and acidic residues.

The protein belongs to the bacterial ribosomal protein bL27 family. Post-translationally, the N-terminus is cleaved by ribosomal processing cysteine protease Prp.

In Staphylococcus saprophyticus subsp. saprophyticus (strain ATCC 15305 / DSM 20229 / NCIMB 8711 / NCTC 7292 / S-41), this protein is Large ribosomal subunit protein bL27.